A 318-amino-acid polypeptide reads, in one-letter code: Ribose-phosphate pyrophosphokinase (318 aa).

Residues 43–45 (DGE) and 102–103 (RQ) each bind ATP. 2 residues coordinate Mg(2+): H136 and D176. Residue K199 is part of the active site. D-ribose 5-phosphate is bound by residues R201, D225, and 229 to 233 (DTAGT).

It belongs to the ribose-phosphate pyrophosphokinase family. Class I subfamily. Homohexamer. It depends on Mg(2+) as a cofactor.

The protein resides in the cytoplasm. The catalysed reaction is D-ribose 5-phosphate + ATP = 5-phospho-alpha-D-ribose 1-diphosphate + AMP + H(+). It functions in the pathway metabolic intermediate biosynthesis; 5-phospho-alpha-D-ribose 1-diphosphate biosynthesis; 5-phospho-alpha-D-ribose 1-diphosphate from D-ribose 5-phosphate (route I): step 1/1. In terms of biological role, involved in the biosynthesis of the central metabolite phospho-alpha-D-ribosyl-1-pyrophosphate (PRPP) via the transfer of pyrophosphoryl group from ATP to 1-hydroxyl of ribose-5-phosphate (Rib-5-P). In Listeria ivanovii, this protein is Ribose-phosphate pyrophosphokinase.